A 109-amino-acid chain; its full sequence is Aquaporin-2 (109 aa).

The Cytoplasmic segment spans residues 1-6 (SIAFSR). Residues 7-27 (AVFTEFLATLLFVFFGLGSAL) traverse the membrane as a helical segment. Residues 28-35 (NWPQALPS) are Extracellular-facing. A helical transmembrane segment spans residues 36 to 54 (VLQIAMAFGLAIGTLVQML). The Cytoplasmic segment spans residues 55–59 (GHISG). The discontinuously helical intramembrane region spans 60–69 (AHINPAVTVA). An NPA 1 motif is present at residues 63 to 65 (NPA). At 70-80 (CLVGCHISFLR) the chain is on the cytoplasmic side. The helical transmembrane segment at 81-102 (AAFYVAAQLLGAVAGAALLHEV) threads the bilayer. Topologically, residues 103–109 (TPPSIRG) are extracellular.

The protein belongs to the MIP/aquaporin (TC 1.A.8) family. Homotetramer. In terms of processing, serine phosphorylation is necessary and sufficient for expression at the apical membrane. Endocytosis is not phosphorylation-dependent. N-glycosylated.

It localises to the apical cell membrane. Its subcellular location is the basolateral cell membrane. The protein localises to the cell membrane. It is found in the cytoplasmic vesicle membrane. The protein resides in the golgi apparatus. It localises to the trans-Golgi network membrane. It carries out the reaction H2O(in) = H2O(out). It catalyses the reaction glycerol(in) = glycerol(out). Forms a water-specific channel that provides the plasma membranes of renal collecting duct with high permeability to water, thereby permitting water to move in the direction of an osmotic gradient. Plays an essential role in renal water homeostasis. Could also be permeable to glycerol. This is Aquaporin-2 from Erinaceus europaeus (Western European hedgehog).